The following is a 360-amino-acid chain: DNA integrity scanning protein DisA (360 aa).

Positions 9 to 147 (DNDLMDILNI…NNIKYVLRDS (139 aa)) constitute a DAC domain. ATP-binding positions include G76, L94, and 107 to 111 (TRHRT).

This sequence belongs to the DisA family. As to quaternary structure, homooctamer. The cofactor is Mg(2+).

It carries out the reaction 2 ATP = 3',3'-c-di-AMP + 2 diphosphate. Functionally, participates in a DNA-damage check-point that is active prior to asymmetric division when DNA is damaged. DisA forms globular foci that rapidly scan along the chromosomes during sporulation, searching for lesions. When a lesion is present, DisA pauses at the lesion site. This triggers a cellular response that culminates in a temporary block in sporulation initiation. In terms of biological role, also has diadenylate cyclase activity, catalyzing the condensation of 2 ATP molecules into cyclic di-AMP (c-di-AMP). c-di-AMP acts as a signaling molecule that couples DNA integrity with progression of sporulation. The rise in c-di-AMP level generated by DisA while scanning the chromosome, operates as a positive signal that advances sporulation; upon encountering a lesion, the DisA focus arrests at the damaged site and halts c-di-AMP synthesis. In Clostridium tetani (strain Massachusetts / E88), this protein is DNA integrity scanning protein DisA.